A 79-amino-acid chain; its full sequence is U-actitoxin-Avd8b (79 aa).

A signal peptide spans 1–19 (MKSLVIVFVVLLGVAMISA). A propeptide spanning residues 20-36 (NEEELLAILQDQRNDAR) is cleaved from the precursor.

Belongs to the sea anemone 8 toxin family.

It localises to the secreted. The protein localises to the nematocyst. This is U-actitoxin-Avd8b from Anemonia viridis (Snakelocks anemone).